Here is a 468-residue protein sequence, read N- to C-terminus: mRNA cleavage and polyadenylation factor CLP1 (468 aa).

Positions 1–22 (MLSLPGLNLAPQPAEPLNAPTS) are disordered. ATP-binding positions include Glu-35, Lys-74, and 138–143 (HSGKTS).

The protein belongs to the Clp1 family. Clp1 subfamily. Component of a pre-mRNA cleavage factor complex. Interacts directly with PCF11.

It is found in the nucleus. Required for endonucleolytic cleavage during polyadenylation-dependent pre-mRNA 3'-end formation. This is mRNA cleavage and polyadenylation factor CLP1 from Phaeosphaeria nodorum (strain SN15 / ATCC MYA-4574 / FGSC 10173) (Glume blotch fungus).